Consider the following 105-residue polypeptide: Heat shock protein HspQ (105 aa).

It belongs to the HspQ family.

The protein resides in the cytoplasm. Functionally, involved in the degradation of certain denaturated proteins, including DnaA, during heat shock stress. This is Heat shock protein HspQ from Escherichia fergusonii (strain ATCC 35469 / DSM 13698 / CCUG 18766 / IAM 14443 / JCM 21226 / LMG 7866 / NBRC 102419 / NCTC 12128 / CDC 0568-73).